A 537-amino-acid polypeptide reads, in one-letter code: Probable feruloyl esterase ARB_07085 (537 aa).

Residues 1–22 (MVTLPLLLSILPLAAVFSSAAS) form the signal peptide. N67, N76, and N189 each carry an N-linked (GlcNAc...) asparagine glycan. 3 disulfides stabilise this stretch: C196–C459, C263–C280, and C508–C529. The Acyl-ester intermediate role is filled by S197. Positions 264, 267, 269, 271, and 273 each coordinate Ca(2+). Residue N339 is glycosylated (N-linked (GlcNAc...) asparagine). Residues D419 and H458 each act as charge relay system in the active site.

This sequence belongs to the tannase family.

Its subcellular location is the secreted. The catalysed reaction is feruloyl-polysaccharide + H2O = ferulate + polysaccharide.. Its function is as follows. Hydrolyzes the feruloyl-arabinose ester bond in arabinoxylans as well as the feruloyl-galactose and feruloyl-arabinose ester bonds. The protein is Probable feruloyl esterase ARB_07085 of Arthroderma benhamiae (strain ATCC MYA-4681 / CBS 112371) (Trichophyton mentagrophytes).